The following is a 201-amino-acid chain: Probable calcium-binding protein CML15 (201 aa).

A disordered region spans residues 1–55 (MGKVRAFFSRKGRGNSSGRSRSMREAAMNVDWSPRPSDLAAAAAAKPRPPAAEDE). EF-hand domains are found at residues 51–86 (AAED…VGHA), 87–122 (VTDD…PPGD), 125–160 (AAEE…IGEA), and 161–196 (ATVA…GAGF). Residues Asp-64, Asn-66, Asp-68, Arg-70, Glu-75, Asp-100, Asp-102, Asp-104, Tyr-106, Glu-111, Asp-138, Asp-140, Asn-142, Glu-149, Asp-174, Asn-176, Asp-178, and Glu-185 each contribute to the Ca(2+) site.

Functionally, potential calcium sensor. This Oryza sativa subsp. japonica (Rice) protein is Probable calcium-binding protein CML15 (CML15).